A 72-amino-acid polypeptide reads, in one-letter code: UPF0154 protein BLi02038/BL02936 (72 aa).

Residues 4-24 (WVVILVGVLALLAGVALGFFI) traverse the membrane as a helical segment.

Belongs to the UPF0154 family.

The protein localises to the cell membrane. In Bacillus licheniformis (strain ATCC 14580 / DSM 13 / JCM 2505 / CCUG 7422 / NBRC 12200 / NCIMB 9375 / NCTC 10341 / NRRL NRS-1264 / Gibson 46), this protein is UPF0154 protein BLi02038/BL02936.